A 233-amino-acid polypeptide reads, in one-letter code: Purine nucleoside phosphorylase DeoD-type (233 aa).

His4 is a binding site for a purine D-ribonucleoside. Residues Gly20, Arg24, Arg43, and 87-90 contribute to the phosphate site; that span reads RIGT. A purine D-ribonucleoside is bound by residues 179 to 181 and 203 to 204; these read EME and SD. The active-site Proton donor is the Asp204.

The protein belongs to the PNP/UDP phosphorylase family. In terms of assembly, homohexamer; trimer of homodimers.

The catalysed reaction is a purine D-ribonucleoside + phosphate = a purine nucleobase + alpha-D-ribose 1-phosphate. The enzyme catalyses a purine 2'-deoxy-D-ribonucleoside + phosphate = a purine nucleobase + 2-deoxy-alpha-D-ribose 1-phosphate. Its function is as follows. Catalyzes the reversible phosphorolytic breakdown of the N-glycosidic bond in the beta-(deoxy)ribonucleoside molecules, with the formation of the corresponding free purine bases and pentose-1-phosphate. This is Purine nucleoside phosphorylase DeoD-type from Thermoanaerobacter pseudethanolicus (strain ATCC 33223 / 39E) (Clostridium thermohydrosulfuricum).